The sequence spans 215 residues: MKSLHIKICGLTSLVDARAAVAAGADAIGLVFYAPSPRAVSVAQARAIALGIGPFTVATGLFVDADPGFVQSVLAEVPLQLLQFHGSESRAYCESFQRPYMKAIRMRPELDVVAAMAEYPSASAILLDAYRPGVPGGTGETFDWGRVPQHTSRPLVLAGGLAPENVANAISATRVYGVDVSGGVESAPGVKDHEKIHRFITCALQASAQLNSKGD.

Belongs to the TrpF family.

It catalyses the reaction N-(5-phospho-beta-D-ribosyl)anthranilate = 1-(2-carboxyphenylamino)-1-deoxy-D-ribulose 5-phosphate. Its pathway is amino-acid biosynthesis; L-tryptophan biosynthesis; L-tryptophan from chorismate: step 3/5. This Cellvibrio japonicus (strain Ueda107) (Pseudomonas fluorescens subsp. cellulosa) protein is N-(5'-phosphoribosyl)anthranilate isomerase.